We begin with the raw amino-acid sequence, 226 residues long: Lipoprotein-releasing system ATP-binding protein LolD (226 aa).

One can recognise an ABC transporter domain in the interval 5 to 225; sequence FALSNISKFF…EINSCMLSSV (221 aa). 40–47 contributes to the ATP binding site; that stretch reads GRSGSGKS.

This sequence belongs to the ABC transporter superfamily. Lipoprotein translocase (TC 3.A.1.125) family. The complex is composed of two ATP-binding proteins (LolD) and two transmembrane proteins (LolC and LolE).

Its subcellular location is the cell inner membrane. In terms of biological role, part of the ABC transporter complex LolCDE involved in the translocation of mature outer membrane-directed lipoproteins, from the inner membrane to the periplasmic chaperone, LolA. Responsible for the formation of the LolA-lipoprotein complex in an ATP-dependent manner. This is Lipoprotein-releasing system ATP-binding protein LolD from Ehrlichia canis (strain Jake).